A 300-amino-acid polypeptide reads, in one-letter code: Probable low-salt glycan biosynthesis reductase Agl14 (300 aa).

NADH contacts are provided by residues 10-12 (GLL), 46-47 (DI), and 70-72 (AYT). NADPH is bound by residues 11–12 (LL), 46–47 (DI), 70–72 (AYT), Tyr-109, Tyr-135, and Lys-139. Tyr-135 and Lys-139 together coordinate NADH. Residue Tyr-135 is the Proton donor/acceptor of the active site.

The protein belongs to the dTDP-4-dehydrorhamnose reductase family.

It participates in protein modification; protein glycosylation. It functions in the pathway cell surface structure biogenesis; S-layer biogenesis. Functionally, reductase involved in N-glycan biosynthetic pathway that takes place under low-salt conditions (1.75 M instead of 3.4 M). Participates in the formation of the tetrasaccharide present at 'Asn-532' of S-layer glycoprotein Csg, consisting of a sulfated hexose, 2 hexoses and rhamnose. Involved in the addition of final rhamnose (sugar 4) of the tetrasaccharide on the dolichol phosphate carrier. The protein is Probable low-salt glycan biosynthesis reductase Agl14 (agl14) of Haloferax volcanii (strain ATCC 29605 / DSM 3757 / JCM 8879 / NBRC 14742 / NCIMB 2012 / VKM B-1768 / DS2) (Halobacterium volcanii).